A 76-amino-acid polypeptide reads, in one-letter code: Kappa-actitoxin-Avd4m (76 aa).

Residues 1–19 (MNKALFLCLVVLCAAVVFA) form the signal peptide. Positions 20-31 (AEDLQKAKHAPF) are excised as a propeptide. Intrachain disulfides connect C37/C72, C39/C65, and C55/C73.

It belongs to the sea anemone type 3 (BDS) potassium channel toxin family. Weakly expressed in the ectodermal tissue from the distal and proximal tentacles, body wall, and oral disk.

The protein resides in the secreted. It is found in the nematocyst. Functionally, blocks Kv3 voltage-gated potassium channels. Reduces blood pressure. This is Kappa-actitoxin-Avd4m from Anemonia viridis (Snakelocks anemone).